A 440-amino-acid polypeptide reads, in one-letter code: L-seryl-tRNA(Sec) selenium transferase (440 aa).

Residue K282 is modified to N6-(pyridoxal phosphate)lysine.

Belongs to the SelA family. Requires pyridoxal 5'-phosphate as cofactor.

The protein localises to the cytoplasm. It catalyses the reaction L-seryl-tRNA(Sec) + selenophosphate + H(+) = L-selenocysteinyl-tRNA(Sec) + phosphate. It participates in aminoacyl-tRNA biosynthesis; selenocysteinyl-tRNA(Sec) biosynthesis; selenocysteinyl-tRNA(Sec) from L-seryl-tRNA(Sec) (bacterial route): step 1/1. Converts seryl-tRNA(Sec) to selenocysteinyl-tRNA(Sec) required for selenoprotein biosynthesis. The sequence is that of L-seryl-tRNA(Sec) selenium transferase from Campylobacter jejuni subsp. doylei (strain ATCC BAA-1458 / RM4099 / 269.97).